Consider the following 337-residue polypeptide: Phosphatidylglycerophosphate phosphatase PTPMT1 (337 aa).

The segment at 1-20 (MYIKELTETDEEKRERSVED) is disordered. Substrate contacts are provided by Y55 and D133. The Tyrosine-protein phosphatase domain maps to 73–220 (WWDRVAEFIL…VVEYYHVKVL (148 aa)). Residue C164 is the Phosphocysteine intermediate of the active site. The Glucan phosphatase signature motif CXAGXGR signature appears at 164-170 (CKAGRGR). Residue 165–170 (KAGRGR) participates in substrate binding.

This sequence belongs to the protein-tyrosine phosphatase family. Non-receptor class dual specificity subfamily. Expressed in stems, roots, flowers, mature seeds and leaves.

It catalyses the reaction O-phospho-L-seryl-[protein] + H2O = L-seryl-[protein] + phosphate. The catalysed reaction is O-phospho-L-threonyl-[protein] + H2O = L-threonyl-[protein] + phosphate. The enzyme catalyses O-phospho-L-tyrosyl-[protein] + H2O = L-tyrosyl-[protein] + phosphate. It carries out the reaction a 1,2-diacyl-sn-glycero-3-phospho-(1'-sn-glycero-3'-phosphate) + H2O = a 1,2-diacyl-sn-glycero-3-phospho-(1'-sn-glycerol) + phosphate. It participates in phospholipid metabolism; phosphatidylglycerol biosynthesis; phosphatidylglycerol from CDP-diacylglycerol: step 2/2. Its function is as follows. Exhibits phosphatidylglycerophosphate phosphatase activity. Involved in root growth and columella cells organization. May possess protein phosphatase activity. The sequence is that of Phosphatidylglycerophosphate phosphatase PTPMT1 from Arabidopsis thaliana (Mouse-ear cress).